Consider the following 435-residue polypeptide: ATP-dependent protease ATPase subunit HslU (435 aa).

ATP is bound by residues I18, 60-65 (GVGKTE), D248, E313, and R385.

This sequence belongs to the ClpX chaperone family. HslU subfamily. A double ring-shaped homohexamer of HslV is capped on each side by a ring-shaped HslU homohexamer. The assembly of the HslU/HslV complex is dependent on binding of ATP.

It is found in the cytoplasm. Functionally, ATPase subunit of a proteasome-like degradation complex; this subunit has chaperone activity. The binding of ATP and its subsequent hydrolysis by HslU are essential for unfolding of protein substrates subsequently hydrolyzed by HslV. HslU recognizes the N-terminal part of its protein substrates and unfolds these before they are guided to HslV for hydrolysis. This Rhizobium etli (strain CIAT 652) protein is ATP-dependent protease ATPase subunit HslU.